A 454-amino-acid chain; its full sequence is DNA-binding protein BIN4 (454 aa).

Disordered stretches follow at residues 24–53, 103–249, and 380–454; these read LLSL…DDGD, AGKE…DKDT, and TFES…KAKK. A compositionally biased stretch (basic and acidic residues) spans 112-123; it reads DCEKLSSKHKDA. Positions 132–150 are enriched in polar residues; that stretch reads LVSSDSEPSSPIKQEVTVS. Positions 229-249 are enriched in basic and acidic residues; it reads TPKEENCAQEILKTEDKDKDT. A compositionally biased stretch (basic residues) spans 438–454; the sequence is PAKKARNSAPKKPKAKK.

In terms of assembly, interacts with TOP6A, RHL1 and itself, but not with TOP6B. As to expression, expressed in expanding cotyledons, vascular cells, elongating root cells, developing leaf trichomes, root and apical meristems and lateral root primordia.

It is found in the nucleus. Functionally, component of the DNA topoisomerase VI complex. Binds to DNA. Required for chromatin organization and progression of endoreduplication cycles. The loss of BIN4 activates the ATM- and ATR-dependent DNA damage responses in postmitotic cells and induces the ectopic expression of the mitotic G2/M-specific cyclin B1;1 gene in non-dividing cells. In Arabidopsis thaliana (Mouse-ear cress), this protein is DNA-binding protein BIN4 (BIN4).